We begin with the raw amino-acid sequence, 286 residues long: MKKAMLALAATSVIALSACGTSSSDKIVTSKAGDITKEEFYDQMKTQAGKQVLNNMVMEKVLIKNYKVEDKDVDKKFDEMKKQYGDQFDTLLKQQGIKEETIKTGVRAQLAQEKAIEKTITDKELKENYKPEIKASHILVKDEATAKKVKEELGQGKSFEELAKQYSEDTGSKEKGGDLGYFTAGKMVKEFEDAAYKLKKDEVSEPVKSQFGYHIIKVTDIKEQKPFDEVKGDIKKDLVQKKAQDAAFMNDLMMKEIKKADVKVDDKDLKDLFEEKKADDKKEEKK.

The N-terminal stretch at M1–A18 is a signal peptide. Residue C19 is the site of N-palmitoyl cysteine attachment. Residue C19 is the site of S-diacylglycerol cysteine attachment. The region spanning K130–D220 is the PpiC domain.

Belongs to the PrsA family.

It localises to the cell membrane. It catalyses the reaction [protein]-peptidylproline (omega=180) = [protein]-peptidylproline (omega=0). In terms of biological role, plays a major role in protein secretion by helping the post-translocational extracellular folding of several secreted proteins. The protein is Foldase protein PrsA 1 (prsA1) of Bacillus cereus (strain ATCC 14579 / DSM 31 / CCUG 7414 / JCM 2152 / NBRC 15305 / NCIMB 9373 / NCTC 2599 / NRRL B-3711).